Reading from the N-terminus, the 520-residue chain is MSTGPPSGISLVSMTTPRKSGQHTPESWSKWTHPSIEPLFTKRVMKPLPSWTGAFSLVSEFFTHEHQVFPCFNAPAFMCLLGQQYSVECTESPAWWVSLNSVLAIAQRRRAEAAQSAEAEDLAWAYASNALAGTWDILMRSTQLSSVQALLAIAWFFIGTPNPQPSFMLVGCAVRLAHSIGIHVESQDPSISPAEANLRKKVFWIAICLDQELCLRTGRSPCHDLNAGYVDPPMDSLDETEITKTVDGHELNLFQSQIQLAVIQGAIYRDLHSGKAPPNCIADSVADLLQKLENWRIEFAPTLTHDSTVRCEHHGLMRLYLSYYNAVIVVSRAHSLAYWVSPNHPAFSALPSSMRDSIENCLNASRCIIELSKLIPVTWRSFHWDIISILMSAVVILCIMAIRNPMNELATNDMGSVGDVLHIFKTLDEAYGNTYLTQVQKVCEKLYRKAHYAMQSSNAQPVESVDVVSPALEDSSNANQQQARHTDSTLEFNPNAFEQTMPYPLPMGWDLDTFLWTPTI.

Residues 1–30 form a disordered region; sequence MSTGPPSGISLVSMTTPRKSGQHTPESWSK.

The protein resides in the nucleus. In terms of biological role, transcription factor that regulates the expression of the gene cluster that mediates the biosynthesis of fusaridione A. This Fusarium heterosporum protein is Fusaridione A cluster transcription factor fsdR.